A 339-amino-acid chain; its full sequence is MQDKLNQIKELALVEIKEAKDSTTIDTIRVKYLGKKGELTTILRGMGSLSKEERPIVGKLANEVREVLEAELEAVTKAVKEAEKQEKLKNEVIDISMPGKKQTIGKKHPLEQTLDEMKKIFVSMGFAIEDGPEVEKDYYNFEALNIPKNHPARSEQDTFYINDNVVLRTQTSPVQARVMEKQQPPIKMISPGKVFRSDAVDATHSPIFYQMEGLVIDKDITFADLKGTLELFAKKMFGDKVKTKFRPHHFPFTEPSAEMDATCFVCNGKGCKVCKGEGWIEILGCGMVHPQVLRNCGIDPEVYSGFAFGFGVDRMVMLKYGIDDIRLLYESDMRFLNQF.

A Mg(2+)-binding site is contributed by Glu-254.

The protein belongs to the class-II aminoacyl-tRNA synthetase family. Phe-tRNA synthetase alpha subunit type 1 subfamily. As to quaternary structure, tetramer of two alpha and two beta subunits. Requires Mg(2+) as cofactor.

The protein resides in the cytoplasm. The catalysed reaction is tRNA(Phe) + L-phenylalanine + ATP = L-phenylalanyl-tRNA(Phe) + AMP + diphosphate + H(+). The chain is Phenylalanine--tRNA ligase alpha subunit from Clostridium perfringens (strain ATCC 13124 / DSM 756 / JCM 1290 / NCIMB 6125 / NCTC 8237 / Type A).